The sequence spans 205 residues: Holliday junction resolvase RecU (205 aa).

Residues 1–26 are disordered; the sequence is MIRYPNGKSYQPIQPIGTKKRISGES. 4 residues coordinate Mg(2+): T86, D88, E101, and Q120.

Belongs to the RecU family. Mg(2+) is required as a cofactor.

The protein localises to the cytoplasm. The catalysed reaction is Endonucleolytic cleavage at a junction such as a reciprocal single-stranded crossover between two homologous DNA duplexes (Holliday junction).. Its function is as follows. Endonuclease that resolves Holliday junction intermediates in genetic recombination. Cleaves mobile four-strand junctions by introducing symmetrical nicks in paired strands. Promotes annealing of linear ssDNA with homologous dsDNA. Required for DNA repair, homologous recombination and chromosome segregation. This Bacillus pumilus (strain SAFR-032) protein is Holliday junction resolvase RecU.